Reading from the N-terminus, the 267-residue chain is Regulatory protein RecX (267 aa).

It belongs to the RecX family.

The protein resides in the cytoplasm. Its function is as follows. Modulates RecA activity. This Leuconostoc mesenteroides subsp. mesenteroides (strain ATCC 8293 / DSM 20343 / BCRC 11652 / CCM 1803 / JCM 6124 / NCDO 523 / NBRC 100496 / NCIMB 8023 / NCTC 12954 / NRRL B-1118 / 37Y) protein is Regulatory protein RecX.